The chain runs to 208 residues: Uracil phosphoribosyltransferase (208 aa).

5-phospho-alpha-D-ribose 1-diphosphate contacts are provided by residues R77, R102, and 129–137; that span reads DPMLATGNS. Uracil-binding positions include I193 and 198-200; that span reads GDA. D199 serves as a coordination point for 5-phospho-alpha-D-ribose 1-diphosphate.

The protein belongs to the UPRTase family. It depends on Mg(2+) as a cofactor.

It carries out the reaction UMP + diphosphate = 5-phospho-alpha-D-ribose 1-diphosphate + uracil. It functions in the pathway pyrimidine metabolism; UMP biosynthesis via salvage pathway; UMP from uracil: step 1/1. Allosterically activated by GTP. Catalyzes the conversion of uracil and 5-phospho-alpha-D-ribose 1-diphosphate (PRPP) to UMP and diphosphate. This chain is Uracil phosphoribosyltransferase, found in Mycoplasmopsis pulmonis (strain UAB CTIP) (Mycoplasma pulmonis).